The primary structure comprises 275 residues: Shikimate dehydrogenase (NADP(+)) (275 aa).

Shikimate-binding positions include 19 to 21 (SIS) and Thr-66. Lys-70 functions as the Proton acceptor in the catalytic mechanism. 2 residues coordinate shikimate: Asn-91 and Asp-106. NADP(+)-binding positions include 129 to 133 (GAGGA), 153 to 158 (NRTYGR), and Ile-219. Tyr-221 provides a ligand contact to shikimate. Gly-242 contributes to the NADP(+) binding site.

This sequence belongs to the shikimate dehydrogenase family. Homodimer.

The catalysed reaction is shikimate + NADP(+) = 3-dehydroshikimate + NADPH + H(+). It functions in the pathway metabolic intermediate biosynthesis; chorismate biosynthesis; chorismate from D-erythrose 4-phosphate and phosphoenolpyruvate: step 4/7. In terms of biological role, involved in the biosynthesis of the chorismate, which leads to the biosynthesis of aromatic amino acids. Catalyzes the reversible NADPH linked reduction of 3-dehydroshikimate (DHSA) to yield shikimate (SA). In Dictyoglomus thermophilum (strain ATCC 35947 / DSM 3960 / H-6-12), this protein is Shikimate dehydrogenase (NADP(+)).